Reading from the N-terminus, the 299-residue chain is ATP phosphoribosyltransferase (299 aa).

Belongs to the ATP phosphoribosyltransferase family. Long subfamily. Requires Mg(2+) as cofactor.

Its subcellular location is the cytoplasm. It carries out the reaction 1-(5-phospho-beta-D-ribosyl)-ATP + diphosphate = 5-phospho-alpha-D-ribose 1-diphosphate + ATP. It functions in the pathway amino-acid biosynthesis; L-histidine biosynthesis; L-histidine from 5-phospho-alpha-D-ribose 1-diphosphate: step 1/9. Feedback inhibited by histidine. Functionally, catalyzes the condensation of ATP and 5-phosphoribose 1-diphosphate to form N'-(5'-phosphoribosyl)-ATP (PR-ATP). Has a crucial role in the pathway because the rate of histidine biosynthesis seems to be controlled primarily by regulation of HisG enzymatic activity. In Shewanella piezotolerans (strain WP3 / JCM 13877), this protein is ATP phosphoribosyltransferase.